We begin with the raw amino-acid sequence, 105 residues long: UPF0145 protein AHA_2580 (105 aa).

This sequence belongs to the UPF0145 family.

The polypeptide is UPF0145 protein AHA_2580 (Aeromonas hydrophila subsp. hydrophila (strain ATCC 7966 / DSM 30187 / BCRC 13018 / CCUG 14551 / JCM 1027 / KCTC 2358 / NCIMB 9240 / NCTC 8049)).